Here is a 334-residue protein sequence, read N- to C-terminus: L-lactate dehydrogenase B chain (334 aa).

30–58 (GQVGMACAVSVLLKELADELALVDILEDK) contributes to the NAD(+) binding site. Residues Arg-107, Asn-139, and Arg-170 each coordinate substrate. An NAD(+)-binding site is contributed by Asn-139. His-194 serves as the catalytic Proton acceptor. Thr-249 serves as a coordination point for substrate.

This sequence belongs to the LDH/MDH superfamily. LDH family. Homotetramer.

It localises to the cytoplasm. It catalyses the reaction (S)-lactate + NAD(+) = pyruvate + NADH + H(+). It participates in fermentation; pyruvate fermentation to lactate; (S)-lactate from pyruvate: step 1/1. Its function is as follows. Interconverts simultaneously and stereospecifically pyruvate and lactate with concomitant interconversion of NADH and NAD(+). This is L-lactate dehydrogenase B chain (ldhb) from Xenopus laevis (African clawed frog).